The following is a 478-amino-acid chain: MTIAVDLQGRPFHFIGIGGIGMSALAQVVTERQLPVSGSDIRRSHITDRLAQLGAQIFDRQAATNLEFFQEAVSAGQSPQVICSTAIHAHNEEYQAAIDLGCPVFHRSDLLAALLRVYESIAVAGTHGKTTTSGLIAYLLYQAGLDPTVVIGGEVNALGGNARLGQGRHLVAEADESDGSLVKLQAAIGIITNIELDHPDHYCDLEAVISTFKTFSDNCSQLIANWDCPTVRDRLPGTISYSLDPARGADYTVDQVSFRGSGTQARIWERGELLGRIHLPLLEAHNLSNALAAIAACRHLGMDFASIREGLAGFEGARRRFEFRGSAQGIQFVDDYAHHPSELAATLAAARLQIDSGCSRLPEVPKRLVAIFQPHRYSRTQAFLAEFAQSFGPADLVLISDIYAAGERNPGQLSGQTLADAIAQYQANVHYAPDLEAVEQRLHQLLQPGDLALFLGAGNLNQVIPRLLDHYACDRSAA.

It belongs to the MurCDEF family.

The protein localises to the cytoplasm. The enzyme catalyses UDP-N-acetyl-alpha-D-muramate + L-alanine + ATP = UDP-N-acetyl-alpha-D-muramoyl-L-alanine + ADP + phosphate + H(+). The protein operates within cell wall biogenesis; peptidoglycan biosynthesis. Its function is as follows. Cell wall formation. This Synechococcus elongatus (strain ATCC 33912 / PCC 7942 / FACHB-805) (Anacystis nidulans R2) protein is UDP-N-acetylmuramate--L-alanine ligase (murC).